Reading from the N-terminus, the 96-residue chain is MSIRPLHDRVLVRREEEETKSAGGIVLPGSAAEKPSRGEVIAVGNGKITENGDVRPLDVKAGDTVIFGQYSGSTVKVEGEELLIMSEAEILAVVED.

The protein belongs to the GroES chaperonin family. In terms of assembly, heptamer of 7 subunits arranged in a ring. Interacts with the chaperonin GroEL.

Its subcellular location is the cytoplasm. Together with the chaperonin GroEL, plays an essential role in assisting protein folding. The GroEL-GroES system forms a nano-cage that allows encapsulation of the non-native substrate proteins and provides a physical environment optimized to promote and accelerate protein folding. GroES binds to the apical surface of the GroEL ring, thereby capping the opening of the GroEL channel. This Alcanivorax borkumensis (strain ATCC 700651 / DSM 11573 / NCIMB 13689 / SK2) protein is Co-chaperonin GroES.